Here is a 157-residue protein sequence, read N- to C-terminus: uncharacterized protein (157 aa).

The N-acetyltransferase domain maps to 9–146; sequence LLINYKTLDE…GDFYVWHPET (138 aa).

This is an uncharacterized protein from Bacillus cereus (strain ATCC 10987 / NRS 248).